We begin with the raw amino-acid sequence, 428 residues long: Adenylosuccinate synthetase (428 aa).

Residues 11-17 and 39-41 each bind GTP; these read GDEGKGK and GHT. Aspartate 12 acts as the Proton acceptor in catalysis. Aspartate 12 and glycine 39 together coordinate Mg(2+). Residues 12-15, 37-40, threonine 130, arginine 144, asparagine 226, threonine 241, and arginine 305 contribute to the IMP site; these read DEGK and NAGH. Histidine 40 serves as the catalytic Proton donor. 301-307 contacts substrate; sequence VTTGRKR. Residues arginine 307, 333-335, and 415-417 contribute to the GTP site; these read KLD and GTG.

It belongs to the adenylosuccinate synthetase family. In terms of assembly, homodimer. The cofactor is Mg(2+).

It localises to the cytoplasm. It carries out the reaction IMP + L-aspartate + GTP = N(6)-(1,2-dicarboxyethyl)-AMP + GDP + phosphate + 2 H(+). It functions in the pathway purine metabolism; AMP biosynthesis via de novo pathway; AMP from IMP: step 1/2. Functionally, plays an important role in the de novo pathway and in the salvage pathway of purine nucleotide biosynthesis. Catalyzes the first committed step in the biosynthesis of AMP from IMP. The chain is Adenylosuccinate synthetase from Candida albicans (strain SC5314 / ATCC MYA-2876) (Yeast).